The sequence spans 399 residues: Insertion element IS116 uncharacterized 44.8 kDa protein (399 aa).

The protein belongs to the transposase IS1111A/IS1328/IS1533 family.

This Streptomyces clavuligerus protein is Insertion element IS116 uncharacterized 44.8 kDa protein.